Here is a 335-residue protein sequence, read N- to C-terminus: Ornithine carbamoyltransferase 2, catabolic (335 aa).

Carbamoyl phosphate is bound by residues 62-65, glutamine 89, arginine 113, and 140-143; these read STRT and HPTQ. L-ornithine-binding positions include asparagine 172, aspartate 236, and 240-241; that span reads SM. Carbamoyl phosphate contacts are provided by residues 277 to 278 and arginine 322; that span reads CL.

It belongs to the aspartate/ornithine carbamoyltransferase superfamily. OTCase family.

It localises to the cytoplasm. The catalysed reaction is carbamoyl phosphate + L-ornithine = L-citrulline + phosphate + H(+). It participates in amino-acid degradation; L-arginine degradation via ADI pathway; carbamoyl phosphate from L-arginine: step 2/2. Its function is as follows. Reversibly catalyzes the transfer of the carbamoyl group from carbamoyl phosphate (CP) to the N(epsilon) atom of ornithine (ORN) to produce L-citrulline. The protein is Ornithine carbamoyltransferase 2, catabolic (arcB2) of Staphylococcus epidermidis (strain ATCC 12228 / FDA PCI 1200).